Consider the following 336-residue polypeptide: Protein-glutamate methylesterase/protein-glutamine glutaminase 2 (336 aa).

Positions 2 to 119 constitute a Response regulatory domain; that stretch reads KIAIVNDMPM…PNPKEAAAPL (118 aa). A 4-aspartylphosphate modification is found at aspartate 53. Residues 147–336 enclose the CheB-type methylesterase domain; the sequence is PSRRDRLVAI…APRLIEVFTQ (190 aa). Residues serine 159, histidine 186, and aspartate 279 contribute to the active site.

It belongs to the CheB family. Phosphorylated by CheA. Phosphorylation of the N-terminal regulatory domain activates the methylesterase activity.

The protein localises to the cytoplasm. It carries out the reaction [protein]-L-glutamate 5-O-methyl ester + H2O = L-glutamyl-[protein] + methanol + H(+). The enzyme catalyses L-glutaminyl-[protein] + H2O = L-glutamyl-[protein] + NH4(+). In terms of biological role, involved in chemotaxis. Part of a chemotaxis signal transduction system that modulates chemotaxis in response to various stimuli. Catalyzes the demethylation of specific methylglutamate residues introduced into the chemoreceptors (methyl-accepting chemotaxis proteins or MCP) by CheR. Also mediates the irreversible deamidation of specific glutamine residues to glutamic acid. This chain is Protein-glutamate methylesterase/protein-glutamine glutaminase 2, found in Pseudomonas syringae pv. syringae (strain B728a).